The primary structure comprises 208 residues: Small ribosomal subunit protein uS4 (208 aa).

The region spanning 98-161 is the S4 RNA-binding domain; it reads TRLDNTVYRL…RKIPVIAEAQ (64 aa).

The protein belongs to the universal ribosomal protein uS4 family. In terms of assembly, part of the 30S ribosomal subunit. Contacts protein S5. The interaction surface between S4 and S5 is involved in control of translational fidelity.

One of the primary rRNA binding proteins, it binds directly to 16S rRNA where it nucleates assembly of the body of the 30S subunit. In terms of biological role, with S5 and S12 plays an important role in translational accuracy. The polypeptide is Small ribosomal subunit protein uS4 (Maridesulfovibrio salexigens (strain ATCC 14822 / DSM 2638 / NCIMB 8403 / VKM B-1763) (Desulfovibrio salexigens)).